A 426-amino-acid polypeptide reads, in one-letter code: Cytochrome c biogenesis protein CcsB (426 aa).

3 consecutive transmembrane segments (helical) span residues 14-34 (LKIAILLLLVIAVSCAAGTLI), 72-92 (SFWFLFLLIWLGLALSVCSFR), and 162-182 (LGPILIHLGMILLMIGATYGS).

It belongs to the Ccs1/CcsB family. As to quaternary structure, may interact with CcsA.

The protein localises to the cellular thylakoid membrane. In terms of biological role, required during biogenesis of c-type cytochromes (cytochrome c6 and cytochrome f) at the step of heme attachment. This is Cytochrome c biogenesis protein CcsB from Prochlorococcus marinus (strain NATL2A).